The following is a 72-amino-acid chain: Prokaryotic ubiquitin-like protein Pup (72 aa).

A compositionally biased stretch (gly residues) spans 1-10; it reads MATKDTGGGQ. Positions 1–45 are disordered; the sequence is MATKDTGGGQQKATRNTEEVEEQAQDAQASEDLKERQEKLSDDVD. A coiled-coil region spans residues 9–60; it reads GQQKATRNTEEVEEQAQDAQASEDLKERQEKLSDDVDSVLDEIDDVLEENAE. Residues 28 to 66 form an ARC ATPase binding region; the sequence is QASEDLKERQEKLSDDVDSVLDEIDDVLEENAEDFVRSF. Residues 31–42 show a composition bias toward basic and acidic residues; that stretch reads EDLKERQEKLSD. Residue Glu72 forms an Isoglutamyl lysine isopeptide (Glu-Lys) (interchain with K-? in acceptor proteins) linkage.

The protein belongs to the prokaryotic ubiquitin-like protein family. As to quaternary structure, strongly interacts with the proteasome-associated ATPase ARC through a hydrophobic interface; the interacting region of Pup lies in its C-terminal half. There is one Pup binding site per ARC hexamer ring.

The protein operates within protein degradation; proteasomal Pup-dependent pathway. Protein modifier that is covalently attached to lysine residues of substrate proteins, thereby targeting them for proteasomal degradation. The tagging system is termed pupylation. The chain is Prokaryotic ubiquitin-like protein Pup from Streptomyces avermitilis (strain ATCC 31267 / DSM 46492 / JCM 5070 / NBRC 14893 / NCIMB 12804 / NRRL 8165 / MA-4680).